A 390-amino-acid polypeptide reads, in one-letter code: (S)-8-oxocitronellyl enol synthase CYC2 (390 aa).

Residues 35 to 37, 63 to 64, 81 to 82, 105 to 106, and Gln143 each bind NADP(+); these read TGI, RR, DI, and TW. Catalysis depends on residues Lys147 and Tyr179. Lys147 and Tyr179 together coordinate substrate. Residues Tyr179 and 213-215 each bind NADP(+); that span reads SMM.

Belongs to the short-chain dehydrogenases/reductases (SDR) family. Highly divergent.

It catalyses the reaction (S)-8-oxocitronellyl enol + NADP(+) = (6E)-8-oxogeranial + NADPH + H(+). The catalysed reaction is (S)-8-oxocitronellyl enol + NAD(+) = (6E)-8-oxogeranial + NADH + H(+). Its function is as follows. Iridoid synthase that catalyzes the first step in generation of the iridoid ring scaffold using the linear monoterpene (6E)-8-oxogeranial as substrate. Iridoids comprise a large family of distinctive bicyclic monoterpenes that possess a wide range of pharmacological activities, including anticancer, anti-inflammatory, antifungal and antibacterial activities. The protein is (S)-8-oxocitronellyl enol synthase CYC2 of Camptotheca acuminata (Happy tree).